The chain runs to 353 residues: DNA integrity scanning protein DisA (353 aa).

A DAC domain is found at 6–144 (DKELMNILKI…GGIKYVLRDS (139 aa)). Residues Gly73, Leu91, and 104–108 (TRHRT) each bind ATP.

Belongs to the DisA family. Homooctamer. Requires Mg(2+) as cofactor.

It carries out the reaction 2 ATP = 3',3'-c-di-AMP + 2 diphosphate. Participates in a DNA-damage check-point that is active prior to asymmetric division when DNA is damaged. DisA forms globular foci that rapidly scan along the chromosomes during sporulation, searching for lesions. When a lesion is present, DisA pauses at the lesion site. This triggers a cellular response that culminates in a temporary block in sporulation initiation. In terms of biological role, also has diadenylate cyclase activity, catalyzing the condensation of 2 ATP molecules into cyclic di-AMP (c-di-AMP). c-di-AMP acts as a signaling molecule that couples DNA integrity with progression of sporulation. The rise in c-di-AMP level generated by DisA while scanning the chromosome, operates as a positive signal that advances sporulation; upon encountering a lesion, the DisA focus arrests at the damaged site and halts c-di-AMP synthesis. The sequence is that of DNA integrity scanning protein DisA from Clostridium botulinum (strain 657 / Type Ba4).